The primary structure comprises 141 residues: Nucleoside diphosphate kinase (141 aa).

ATP-binding residues include K11, F59, R87, T93, R104, and N114. Residue H117 is the Pros-phosphohistidine intermediate of the active site.

The protein belongs to the NDK family. As to quaternary structure, homotetramer. Mg(2+) serves as cofactor.

The protein localises to the cytoplasm. The catalysed reaction is a 2'-deoxyribonucleoside 5'-diphosphate + ATP = a 2'-deoxyribonucleoside 5'-triphosphate + ADP. The enzyme catalyses a ribonucleoside 5'-diphosphate + ATP = a ribonucleoside 5'-triphosphate + ADP. Major role in the synthesis of nucleoside triphosphates other than ATP. The ATP gamma phosphate is transferred to the NDP beta phosphate via a ping-pong mechanism, using a phosphorylated active-site intermediate. The chain is Nucleoside diphosphate kinase from Albidiferax ferrireducens (strain ATCC BAA-621 / DSM 15236 / T118) (Rhodoferax ferrireducens).